The primary structure comprises 75 residues: uncharacterized protein (75 aa).

A helical transmembrane segment spans residues 49 to 69 (VDIVAVATTLPFIVAVICIVF).

The protein localises to the host membrane. This is an uncharacterized protein from Saccharolobus islandicus (Sulfolobus islandicus).